A 971-amino-acid chain; its full sequence is Isoleucine--tRNA ligase (971 aa).

The short motif at P60 to H70 is the 'HIGH' region element. Residue E563 coordinates L-isoleucyl-5'-AMP. The 'KMSKS' region signature appears at K604–S608. ATP is bound at residue K607. The Zn(2+) site is built by C922, C925, C942, and C945.

The protein belongs to the class-I aminoacyl-tRNA synthetase family. IleS type 1 subfamily. In terms of assembly, monomer. Requires Zn(2+) as cofactor.

It is found in the cytoplasm. It carries out the reaction tRNA(Ile) + L-isoleucine + ATP = L-isoleucyl-tRNA(Ile) + AMP + diphosphate. Catalyzes the attachment of isoleucine to tRNA(Ile). As IleRS can inadvertently accommodate and process structurally similar amino acids such as valine, to avoid such errors it has two additional distinct tRNA(Ile)-dependent editing activities. One activity is designated as 'pretransfer' editing and involves the hydrolysis of activated Val-AMP. The other activity is designated 'posttransfer' editing and involves deacylation of mischarged Val-tRNA(Ile). The polypeptide is Isoleucine--tRNA ligase (Acaryochloris marina (strain MBIC 11017)).